Here is a 1169-residue protein sequence, read N- to C-terminus: DNA repair protein RAD5 (1169 aa).

The residue at position 2 (serine 2) is an N-acetylserine. Residues serine 20, serine 23, serine 129, and serine 130 each carry the phosphoserine modification. The segment covering 302-317 (MKRRRTEGGNKREKDN) has biased composition (basic and acidic residues). The interval 302–327 (MKRRRTEGGNKREKDNGNFGRTLTET) is disordered. The Helicase ATP-binding domain occupies 519-730 (PILKTMIKGG…YSLVKFLELD (212 aa)). 532–539 (DEMGLGKT) contacts ATP. The DEGH box signature appears at 681–684 (DEGH). Residues 914–961 (CSICTTEPMDLDKALFTECGHSFCEKCLFEYIEFQNSKNLGLKCPNCR) form an RING-type zinc finger. A Helicase C-terminal domain is found at 995–1165 (KITALLKELQ…RRKRRIEEIQ (171 aa)).

It belongs to the SNF2/RAD54 helicase family. In terms of assembly, homodimer. Interacts with POL30, RAD18, UBC9 and UBC13. Mg(2+) serves as cofactor. Mn(2+) is required as a cofactor. The cofactor is Ca(2+).

The protein resides in the cytoplasm. It localises to the nucleus. Functionally, probable helicase, member of the UBC2/RAD6 epistasis group. Functions with the DNA repair protein RAD18 in error-free postreplication DNA repair. Involved in the maintenance of wild-type rates of instability of simple repetitive sequences such as poly(GT) repeats. Seems to be involved in maintaining a balance which acts in favor of error-prone non-homologous joining during DNA double-strand breaks repairs. Recruits the UBC13-MMS2 dimer to chromatin for DNA repair. In Saccharomyces cerevisiae (strain ATCC 204508 / S288c) (Baker's yeast), this protein is DNA repair protein RAD5 (RAD5).